We begin with the raw amino-acid sequence, 152 residues long: Protein NrdI (152 aa).

Belongs to the NrdI family.

Probably involved in ribonucleotide reductase function. The sequence is that of Protein NrdI from Mycobacterium sp. (strain JLS).